Here is a 338-residue protein sequence, read N- to C-terminus: Putative ankyrin repeat protein CBU_0781 (338 aa).

The tract at residues 1–31 is disordered; it reads MSRRETPTSTISSTPTGTRTPRRRLSRKGHP. The span at 7–19 shows a compositional bias: low complexity; the sequence is PTSTISSTPTGTR. The segment covering 20–31 has biased composition (basic residues); that stretch reads TPRRRLSRKGHP. ANK repeat units follow at residues 92-124 and 125-157; these read QGDT…IVNK and LGET…IKYK. Residues 197 to 242 are a coiled coil; sequence SQIMASDKEIDEIIRNARNLQIIKKEKREAEERARTKKSKQITLQR. Positions 319–338 are disordered; that stretch reads KKEDTTLSRNNSLSCLSSPR. The segment covering 325–338 has biased composition (low complexity); that stretch reads LSRNNSLSCLSSPR.

This Coxiella burnetii (strain RSA 493 / Nine Mile phase I) protein is Putative ankyrin repeat protein CBU_0781.